The chain runs to 489 residues: Tandem C2 domains nuclear protein (489 aa).

Phosphoserine is present on residues Ser-82, Ser-155, Ser-167, Ser-173, and Ser-210. The interval 189–214 is disordered; the sequence is DSFSSVPSSSSSRKNSQGSNRSLDTI. The segment covering 191–210 has biased composition (low complexity); that stretch reads FSSVPSSSSSRKNSQGSNRS. Residues Thr-213 and Thr-215 each carry the phosphothreonine modification. Position 217 is a phosphoserine (Ser-217). 2 consecutive C2 domains span residues 222-341 and 343-470; these read DLGR…SLEI and APSK…NQWK. Positions 446–448 match the Nuclear localization signal motif; it reads RRK.

Its subcellular location is the nucleus. This chain is Tandem C2 domains nuclear protein (Tc2n), found in Mus musculus (Mouse).